The chain runs to 830 residues: Interleukin-4 receptor subunit alpha (830 aa).

Positions 1–32 are cleaved as a signal peptide; it reads MGWLCPGLTFSVSCLILVWAAGSGVTCVSPGG. Residues 33–240 are Extracellular-facing; sequence VRVLEWPICL…NYYEEPLEQR (208 aa). Cysteines 41 and 51 form a disulfide. N-linked (GlcNAc...) asparagine glycans are attached at residues asparagine 60 and asparagine 78. Cysteine 82 and cysteine 94 are disulfide-bonded. Asparagine 120, asparagine 142, and asparagine 170 each carry an N-linked (GlcNAc...) asparagine glycan. Residues 133–232 enclose the Fibronectin type-III domain; it reads APRNLMVHAN…WSPSVKWLNY (100 aa). The residue at position 172 (serine 172) is a Phosphoserine. Asparagine 184 and asparagine 217 each carry an N-linked (GlcNAc...) asparagine glycan. A WSXWS motif motif is present at residues 220-224; that stretch reads WSEWS. Residues 241–264 traverse the membrane as a helical segment; the sequence is LPLGVSISCVVILIICLSCYFGII. At 265-830 the chain is on the cytoplasmic side; that stretch reads RIKKEWWDQI…SPGPACMDTS (566 aa). The short motif at 270–278 is the Box 1 motif element; the sequence is WWDQIPNPA. Residues 378-387 show a composition bias toward acidic residues; sequence ENEEEEEEED. Disordered regions lie at residues 378–403 and 450–488; these read ENEE…GSFQ and MPWA…SLAS. Residues 444-564 form a required for IRS1 activation and IL4-induced cell growth region; sequence ENASAPMPWA…ETWEQILRQS (121 aa). A Phosphotyrosine modification is found at tyrosine 504. 2 disordered regions span residues 508–610 and 623–696; these read STFL…EAGY and CPGT…DGQK. Positions 518–534 are enriched in acidic residues; sequence GELDSDPELAEALEEVE. Pro residues predominate over residues 538–551; it reads PAAPQPSEPPPTLQ. A required for IL4-induced gene expression region spans residues 564 to 662; the sequence is SVLQRRAAPA…VPTPLFTFGL (99 aa). A compositionally biased stretch (low complexity) spans 570 to 582; it reads AAPAPASGPSSSG. A phosphotyrosine mark is found at tyrosine 583 and tyrosine 610. Residues 623–635 show a composition bias toward polar residues; it reads CPGTSGLEPSSGE. Position 638 is a phosphotyrosine (tyrosine 638). Composition is skewed to pro residues over residues 646–655 and 665–676; these read PGCPETPVPT and EPPPSPQNPPFP. The ITIM motif signature appears at 716-721; that stretch reads IVYSAL. Positions 811–830 are disordered; sequence SQTPTAVAMLSPGPACMDTS.

The protein belongs to the type I cytokine receptor family. Type 4 subfamily. In terms of assembly, the functional IL4 receptor is formed by initial binding of IL4 to IL4R. Subsequent recruitment to the complex of the common gamma chain, in immune cells, creates a type I receptor and, in non-immune cells, of IL13RA1 forms a type II receptor. IL4R can also interact with the IL13/IL13RA1 complex to form a similar type II receptor. Interacts with PIK3C3. Interacts with the SH2-containing phosphatases, PTPN6/SHIP1, PTPN11/SHIP2 and INPP5D/SHIP. Interacts with JAK1 through a Box 1-containing region; inhibited by SOCS5. Interacts with SOCS5; inhibits IL4 signaling. Interacts with JAK3. Interacts with CLM1. Interacts with IL13RA2. On IL4 binding, phosphorylated on C-terminal tyrosine residues.

Its subcellular location is the membrane. Receptor for both interleukin 4 and interleukin 13. Couples to the JAK1/2/3-STAT6 pathway. The IL4 response is involved in promoting Th2 differentiation. The IL4/IL13 responses are involved in regulating IgE production and, chemokine and mucus production at sites of allergic inflammation. In certain cell types, can signal through activation of insulin receptor substrates, IRS1/IRS2. This Sus scrofa (Pig) protein is Interleukin-4 receptor subunit alpha (IL4R).